We begin with the raw amino-acid sequence, 218 residues long: Histone H1 (218 aa).

2 stretches are compositionally biased toward low complexity: residues 1–19 (MSET…GAKA) and 27–39 (AAGG…PAGP). Disordered regions lie at residues 1 to 41 (MSET…GPSV) and 89 to 218 (VGKG…PKKK). Ser2 bears the N-acetylserine mark. Positions 37 to 110 (AGPSVTELIT…GASGSFKLNK (74 aa)) constitute an H15 domain. 4 stretches are compositionally biased toward basic residues: residues 119–133 (ATKK…KPAA), 141–158 (KKPK…KAKK), 166–184 (KAAK…KKAA), and 191–218 (KAVK…PKKK).

This sequence belongs to the histone H1/H5 family.

It localises to the nucleus. Its subcellular location is the chromosome. Histones H1 are necessary for the condensation of nucleosome chains into higher-order structures. The polypeptide is Histone H1 (Anas platyrhynchos (Mallard)).